Consider the following 639-residue polypeptide: MISRTIGESIPPNTKHAVSVCLPTWEATVGYEEGESSIINSLTTGYPRFFIHKSIKKLCEILSAKYSMEDEACLCFPSYKVANRCREFIKVKTGLSTKVRILQLCTPKPMNQEEKLWRRECKITVVFVDQEIFPVMKQYWQHSGEIVSSRMAEYILHELQVKDNLKKMETVDNGKKFMTEDENRVNEEYIETRFGRNLNFLAADKAKYLIRKRIATKVVEKIDSEGLSDLFSFEHYNESNGPFNVGSGEALDDDQLNSDIPAETITSMGESGSNSTFENTATDDLKFHVNPNTDVYLFPSGMASIFTAHRLLLNFDAKRLSRSSSRQDKLIGYGPPFKKTVMFGFPYTDTLSILRKFNHTHFLGQGDSTSMNALKNILHSGEQILAVFIEAPSNPLLKMGDLQELKRLSDLYSFYIVVDETVGGFVNIDVLPYADIVCSSLTKIFSGDSNVIAGSLVLNPRGKIYEFARKFMKTEDGYEDCLWCEDALCLERNSRDFVERTIKVNTNTDILLKRVLLPQVGKLFKKIYYPSLTSEDTKRNYDSVMSTKDGGYGGLFSLTFFNIEEAKKFFNNLELCKGPSLGTNFTLACPYAIIAHYQELDEVAQYGVETNLVRVSVGLENSDVLCNVFQRAIEKALGE.

N6-(pyridoxal phosphate)lysine is present on Lys-443.

It belongs to the trans-sulfuration enzymes family. MET7 subfamily. It depends on pyridoxal 5'-phosphate as a cofactor.

It localises to the cytoplasm. Its subcellular location is the nucleus. The enzyme catalyses O-succinyl-L-homoserine + L-cysteine = L,L-cystathionine + succinate + H(+). It functions in the pathway amino-acid biosynthesis; L-methionine biosynthesis via de novo pathway; L-cystathionine from O-succinyl-L-homoserine: step 1/1. Functionally, catalyzes the formation of L-cystathionine from O-succinyl-L-homoserine (OSHS) and L-cysteine, via a gamma-replacement reaction. In the absence of thiol, catalyzes gamma-elimination to form 2-oxobutanoate, succinate and ammonia. This is Cystathionine gamma-synthase from Saccharomyces cerevisiae (strain ATCC 204508 / S288c) (Baker's yeast).